Consider the following 314-residue polypeptide: Methenyltetrahydromethanopterin cyclohydrolase (314 aa).

It belongs to the MCH family.

The protein resides in the cytoplasm. The enzyme catalyses 5,10-methenyl-5,6,7,8-tetrahydromethanopterin + H2O = N(5)-formyl-5,6,7,8-tetrahydromethanopterin + H(+). Its pathway is one-carbon metabolism; methanogenesis from CO(2); 5,10-methenyl-5,6,7,8-tetrahydromethanopterin from CO(2): step 3/3. Catalyzes the reversible interconversion of 5-formyl-H(4)MPT to methenyl-H(4)MPT(+). The polypeptide is Methenyltetrahydromethanopterin cyclohydrolase (Methanoregula boonei (strain DSM 21154 / JCM 14090 / 6A8)).